The chain runs to 242 residues: 7-cyano-7-deazaguanine synthase (242 aa).

13–23 (FSGGQDSSVCL) is an ATP binding site. Zn(2+) is bound by residues Cys201, Cys216, Cys219, and Cys222.

Belongs to the QueC family. Requires Zn(2+) as cofactor.

The enzyme catalyses 7-carboxy-7-deazaguanine + NH4(+) + ATP = 7-cyano-7-deazaguanine + ADP + phosphate + H2O + H(+). It functions in the pathway purine metabolism; 7-cyano-7-deazaguanine biosynthesis. Its function is as follows. Catalyzes the ATP-dependent conversion of 7-carboxy-7-deazaguanine (CDG) to 7-cyano-7-deazaguanine (preQ(0)). In Caulobacter vibrioides (strain ATCC 19089 / CIP 103742 / CB 15) (Caulobacter crescentus), this protein is 7-cyano-7-deazaguanine synthase.